Reading from the N-terminus, the 72-residue chain is uncharacterized protein (72 aa).

This is an uncharacterized protein from Vertebrata (FPV).